The primary structure comprises 144 residues: 3-dehydroquinate dehydratase (144 aa).

Residue tyrosine 22 is the Proton acceptor of the active site. Substrate contacts are provided by asparagine 73, histidine 79, and aspartate 86. Histidine 99 acts as the Proton donor in catalysis. Residues 100–101 (LS) and arginine 110 each bind substrate.

It belongs to the type-II 3-dehydroquinase family. In terms of assembly, homododecamer.

It catalyses the reaction 3-dehydroquinate = 3-dehydroshikimate + H2O. It functions in the pathway metabolic intermediate biosynthesis; chorismate biosynthesis; chorismate from D-erythrose 4-phosphate and phosphoenolpyruvate: step 3/7. Its function is as follows. Catalyzes a trans-dehydration via an enolate intermediate. The sequence is that of 3-dehydroquinate dehydratase from Herpetosiphon aurantiacus (strain ATCC 23779 / DSM 785 / 114-95).